The chain runs to 285 residues: Nucleotide-binding protein CD630_34000 (285 aa).

8-15 (GLSGSGKS) lines the ATP pocket. Residue 59 to 62 (DIRG) participates in GTP binding.

This sequence belongs to the RapZ-like family.

Functionally, displays ATPase and GTPase activities. The protein is Nucleotide-binding protein CD630_34000 of Clostridioides difficile (strain 630) (Peptoclostridium difficile).